Reading from the N-terminus, the 537-residue chain is CWF19-like protein 1 (537 aa).

A disordered region spans residues 297–323 (KQGRKRPSTGRDTRPPHAKQPRKPPQP).

The protein belongs to the CWF19 family.

The sequence is that of CWF19-like protein 1 (Cwf19l1) from Mus musculus (Mouse).